A 1305-amino-acid chain; its full sequence is Contactin-associated protein-like 5 (1305 aa).

A signal peptide spans 1–22 (MDSPALGAVALLLAGFWHLGLT). The 152-residue stretch at 23–174 (ATNYNCDGAL…IGLRVEVFGC (152 aa)) folds into the F5/8 type C domain. At 23 to 1236 (ATNYNCDGAL…PLTNAVRSDS (1214 aa)) the chain is on the extracellular side. Laminin G-like domains follow at residues 180–360 (IADF…TFSC) and 367–544 (PITF…IDLC). Disulfide bonds link Cys329–Cys360, Cys512–Cys544, Cys550–Cys561, Cys555–Cys570, and Cys572–Cys582. In terms of domain architecture, EGF-like 1 spans 546 to 583 (IKDRCLPNYCEHGGKCSQSWTTFYCDCNDTSYMGATCH). The region spanning 584-790 (NSIYEQSCEA…LHCYGDRQFW (207 aa)) is the Fibrinogen C-terminal domain. The Laminin G-like 3 domain occupies 791-956 (NAASFNTEAS…KMTPGVKPGC (166 aa)). Disulfide bonds link Cys929-Cys956, Cys960-Cys973, Cys967-Cys982, Cys984-Cys994, and Cys1163-Cys1198. An EGF-like 2 domain is found at 957–995 (PGHCSSYGNLCHNGGKCVEKYNGYSCDCTSSAYEGPFCK). One can recognise a Laminin G-like 4 domain in the interval 1017-1198 (PVTKNASTSS…VKGSLTESSC (182 aa)). A helical transmembrane segment spans residues 1237–1257 (AVIGGVIAVVIFIIFCIIAIM). At 1258 to 1305 (SRFLYQHKQAHRSSQTKEKEYPENLESSFKADIDLQNTVSECKREYFI) the chain is on the cytoplasmic side.

It belongs to the neurexin family. Expressed in brain.

Its subcellular location is the membrane. Its function is as follows. May play a role in the correct development and proper functioning of the peripheral and central nervous system and be involved in cell adhesion and intercellular communication. This is Contactin-associated protein-like 5 (CNTNAP5) from Gallus gallus (Chicken).